The sequence spans 445 residues: Phosphoglucosamine mutase (445 aa).

Serine 102 serves as the catalytic Phosphoserine intermediate. Residues serine 102, aspartate 241, aspartate 243, and aspartate 245 each coordinate Mg(2+). A Phosphoserine modification is found at serine 102.

It belongs to the phosphohexose mutase family. Requires Mg(2+) as cofactor. In terms of processing, activated by phosphorylation.

It catalyses the reaction alpha-D-glucosamine 1-phosphate = D-glucosamine 6-phosphate. Catalyzes the conversion of glucosamine-6-phosphate to glucosamine-1-phosphate. This chain is Phosphoglucosamine mutase, found in Rhodococcus jostii (strain RHA1).